Reading from the N-terminus, the 98-residue chain is MPRIVNPLDEMLFKEVLKEQQRIRVYIEKARYGKLKTIIEGIDEKEFDLEDIAKKLKAKLACGGTVKKGRIELQGDHREKVKKLLADLGFSEDLIEIE.

The protein belongs to the SUI1 family.

The polypeptide is Protein translation factor SUI1 homolog (Thermococcus onnurineus (strain NA1)).